The sequence spans 368 residues: MTRGFTPSLPVEFPKMGSFRRPRPRFMSSPALSDLPRFQAARQALQLSSNSAWNSVQTAVINVFKGGGLQSNELYALNENIRRLLKSELGSFITDYFQNQLLAKGLLFVEEKIKLCEGENRIEVLAEVWDHFFTETLPTLQAIFYPVQGQELTIRQISLLGFRDLVLLKVKLEDLLLLAQPQLPSSIVQMLLILQSVHEPTGPSEGYLQLEELVKQVVSPFLGISEDRGLSGPTYTLARRHSRVRPKVTLLNYASPITPVSRPLNEMALTPLTEQEGEAYLEKCGSVRRHTVANAHSDIQLLAMATMMHSGLGEESGGEDKCLLLQPSFPPPHRQCSSEPNITDGPDEPEQGATGSQEDSELNCASLS.

At S28 the chain carries Phosphoserine. Positions 312–368 (LGEESGGEDKCLLLQPSFPPPHRQCSSEPNITDGPDEPEQGATGSQEDSELNCASLS) are disordered. The span at 353–368 (ATGSQEDSELNCASLS) shows a compositional bias: polar residues.

It belongs to the PROTOR family. In terms of assembly, interacts with the mammalian target of rapamycin complex 2 (mTORC2) which contains MTOR, MLST8, PRR5, RICTOR, MAPKAP1 and DEPTOR. Interacts with RFFL. Interacts (via C-terminus) with ZFP36 (via C-terminus); this interaction may accelerate ZFP36-mediated mRNA decay during stress. Interacts with RICTOR. In terms of processing, ubiquitinated. Ubiquitination by RFFL promotes proteasomal degradation of PRR5L thereby modifying the substrate-specific activity of the mTORC2 complex. Ubiquitination by RFFL is stimulated by LPA/lysophosphatidic acid.

Functionally, associates with the mTORC2 complex that regulates cellular processes including survival and organization of the cytoskeleton. Regulates the activity of the mTORC2 complex in a substrate-specific manner preventing for instance the specific phosphorylation of PKCs and thereby controlling cell migration. Plays a role in the stimulation of ZFP36-mediated mRNA decay of several ZFP36-associated mRNAs, such as TNF-alpha and GM-CSF, in response to stress. Required for ZFP36 localization to cytoplasmic stress granule (SG) and P-body (PB) in response to stress. The polypeptide is Proline-rich protein 5-like (PRR5L) (Bos taurus (Bovine)).